The sequence spans 449 residues: Bifunctional protein GlmU (449 aa).

The tract at residues 1–231 is pyrophosphorylase; that stretch reads MVRNCLSIVL…FDNVIGINNC (231 aa). UDP-N-acetyl-alpha-D-glucosamine is bound by residues 10–13, lysine 24, glutamine 77, and 82–83; these read LAAG and GT. Aspartate 107 lines the Mg(2+) pocket. Residues glycine 143, glutamate 157, asparagine 172, and asparagine 229 each coordinate UDP-N-acetyl-alpha-D-glucosamine. Asparagine 229 is a binding site for Mg(2+). The segment at 232 to 252 is linker; that stretch reads FELFEADALWQKRKARDLMLS. The segment at 253–449 is N-acetyltransferase; that stretch reads GVTILKPESV…AHLSKNKRNK (197 aa). UDP-N-acetyl-alpha-D-glucosamine is bound by residues arginine 318 and lysine 336. Residue histidine 348 is the Proton acceptor of the active site. UDP-N-acetyl-alpha-D-glucosamine is bound by residues tyrosine 351 and asparagine 362. Residues alanine 365, 371-372, serine 390, serine 408, and arginine 425 contribute to the acetyl-CoA site; that span reads NY.

It in the N-terminal section; belongs to the N-acetylglucosamine-1-phosphate uridyltransferase family. This sequence in the C-terminal section; belongs to the transferase hexapeptide repeat family. Homotrimer. Mg(2+) is required as a cofactor.

The protein resides in the cytoplasm. It catalyses the reaction alpha-D-glucosamine 1-phosphate + acetyl-CoA = N-acetyl-alpha-D-glucosamine 1-phosphate + CoA + H(+). It carries out the reaction N-acetyl-alpha-D-glucosamine 1-phosphate + UTP + H(+) = UDP-N-acetyl-alpha-D-glucosamine + diphosphate. It functions in the pathway nucleotide-sugar biosynthesis; UDP-N-acetyl-alpha-D-glucosamine biosynthesis; N-acetyl-alpha-D-glucosamine 1-phosphate from alpha-D-glucosamine 6-phosphate (route II): step 2/2. It participates in nucleotide-sugar biosynthesis; UDP-N-acetyl-alpha-D-glucosamine biosynthesis; UDP-N-acetyl-alpha-D-glucosamine from N-acetyl-alpha-D-glucosamine 1-phosphate: step 1/1. The protein operates within bacterial outer membrane biogenesis; LPS lipid A biosynthesis. Functionally, catalyzes the last two sequential reactions in the de novo biosynthetic pathway for UDP-N-acetylglucosamine (UDP-GlcNAc). The C-terminal domain catalyzes the transfer of acetyl group from acetyl coenzyme A to glucosamine-1-phosphate (GlcN-1-P) to produce N-acetylglucosamine-1-phosphate (GlcNAc-1-P), which is converted into UDP-GlcNAc by the transfer of uridine 5-monophosphate (from uridine 5-triphosphate), a reaction catalyzed by the N-terminal domain. The sequence is that of Bifunctional protein GlmU from Bartonella bacilliformis (strain ATCC 35685 / KC583 / Herrer 020/F12,63).